Consider the following 457-residue polypeptide: Cyclic dof factor 2 (457 aa).

A disordered region spans residues 1–130 (MADPAIKLFG…GGTACSQEGK (130 aa)). Residues 22 to 35 (DSSSSYTGFLTETQ) are compositionally biased toward polar residues. Composition is skewed to acidic residues over residues 45–54 (TGDDDDEEMG) and 62–73 (EGDDVGDGGGES). 2 stretches are compositionally biased toward basic and acidic residues: residues 74–94 (ETDK…RNES) and 106–118 (EKTE…KTNE). Residues 138–192 (LPCPRCNSMETKFCYYNNYNVNQPRHFCKKCQRYWTAGGTMRNVPVGAGRRKNKS) form a Dof-type zinc finger. Zn(2+) contacts are provided by Cys-140, Cys-143, Cys-165, and Cys-168. Disordered regions lie at residues 334–377 (QPNS…KSKP) and 417–457 (AFRS…HESS). Over residues 337–346 (SPSGSNPNSP) the composition is skewed to low complexity.

Interacts with ADO2 (via kelch repeats) and ADO3 (via kelch repeats). In terms of tissue distribution, expressed in the vasculature of cotyledons and hypocotyls, leaves and roots.

Its subcellular location is the nucleus. Its function is as follows. Transcription factor that binds specifically to a 5'-AA[AG]G-3' consensus core sequence. Regulates a photoperiodic flowering response. Transcriptional repressor of 'CONSTANS' expression. The stability of CDF2 is controlled by 'GIGANTEA' and redundantly by ADO3, ADO2 and/or ADO1. The chain is Cyclic dof factor 2 (CDF2) from Arabidopsis thaliana (Mouse-ear cress).